We begin with the raw amino-acid sequence, 1383 residues long: DNA-directed RNA polymerase subunit beta (1383 aa).

It belongs to the RNA polymerase beta chain family. As to quaternary structure, the RNAP catalytic core consists of 2 alpha, 1 beta, 1 beta' and 1 omega subunit. When a sigma factor is associated with the core the holoenzyme is formed, which can initiate transcription.

It carries out the reaction RNA(n) + a ribonucleoside 5'-triphosphate = RNA(n+1) + diphosphate. In terms of biological role, DNA-dependent RNA polymerase catalyzes the transcription of DNA into RNA using the four ribonucleoside triphosphates as substrates. The polypeptide is DNA-directed RNA polymerase subunit beta (Bartonella henselae (strain ATCC 49882 / DSM 28221 / CCUG 30454 / Houston 1) (Rochalimaea henselae)).